The following is an 84-amino-acid chain: MSLFSFFKNEEKPSSAARAKERLQVVIAHERGAVERPDYLPQLQRDLLEVIKKYVDISEDKLDIKVDCIGGLSTLEVNVELPDS.

Belongs to the MinE family.

Its function is as follows. Prevents the cell division inhibition by proteins MinC and MinD at internal division sites while permitting inhibition at polar sites. This ensures cell division at the proper site by restricting the formation of a division septum at the midpoint of the long axis of the cell. This chain is Cell division topological specificity factor, found in Desulfotalea psychrophila (strain LSv54 / DSM 12343).